The primary structure comprises 461 residues: Interleukin-1 receptor-associated kinase 4 (461 aa).

Residue Met-1 is modified to N-acetylmethionine. A Death domain is found at 20 to 104; sequence RKLSDFIDPQ…APASLLLPDA (85 aa). Lys-34 is modified (N6-acetyllysine). One can recognise a Protein kinase domain in the interval 187-455; sequence SVGGNKMGEG…PDIKKVQQLL (269 aa). Residues 193–201 and Lys-214 contribute to the ATP site; that span reads MGEGGFGVV. Catalysis depends on Asp-312, which acts as the Proton acceptor. ATP contacts are provided by residues 314–317 and Asp-330; that span reads KSAN. 2 positions are modified to phosphothreonine: Thr-343 and Thr-346. The residue at position 347 (Ser-347) is a Phosphoserine.

This sequence belongs to the protein kinase superfamily. TKL Ser/Thr protein kinase family. Pelle subfamily. In terms of assembly, associates with MYD88 and IRAK2 to form a ternary complex called the Myddosome. Once phosphorylated, IRAK4 dissociates from the receptor complex and then associates with the TNF receptor-associated factor 6 (TRAF6), IRAK1, and PELI1; this intermediate complex is required for subsequent NF-kappa-B activation. Direct binding of SMAD6 to PELI1 prevents complex formation and hence negatively regulates IL1R-TLR signaling and eventually NF-kappa-B-mediated gene expression. Interacts with IL1RL1. Interacts (when phosphorylated) with IRAK1. May interact (when phosphorylated) with IRAK3. Mg(2+) is required as a cofactor. In terms of processing, phosphorylated.

The protein resides in the cytoplasm. The catalysed reaction is L-seryl-[protein] + ATP = O-phospho-L-seryl-[protein] + ADP + H(+). It carries out the reaction L-threonyl-[protein] + ATP = O-phospho-L-threonyl-[protein] + ADP + H(+). In terms of biological role, serine/threonine-protein kinase that plays a critical role in initiating innate immune response against foreign pathogens. Involved in Toll-like receptor (TLR) and IL-1R signaling pathways. Is rapidly recruited by MYD88 to the receptor-signaling complex upon TLR activation to form the Myddosome together with IRAK2. Phosphorylates initially IRAK1, thus stimulating the kinase activity and intensive autophosphorylation of IRAK1. Phosphorylates E3 ubiquitin ligases Pellino proteins (PELI1, PELI2 and PELI3) to promote pellino-mediated polyubiquitination of IRAK1. Then, the ubiquitin-binding domain of IKBKG/NEMO binds to polyubiquitinated IRAK1 bringing together the IRAK1-MAP3K7/TAK1-TRAF6 complex and the NEMO-IKKA-IKKB complex. In turn, MAP3K7/TAK1 activates IKKs (CHUK/IKKA and IKBKB/IKKB) leading to NF-kappa-B nuclear translocation and activation. Alternatively, phosphorylates TIRAP to promote its ubiquitination and subsequent degradation. Phosphorylates NCF1 and regulates NADPH oxidase activation after LPS stimulation suggesting a similar mechanism during microbial infections. This chain is Interleukin-1 receptor-associated kinase 4 (IRAK4), found in Bos taurus (Bovine).